Here is a 410-residue protein sequence, read N- to C-terminus: Sprouty-related, EVH1 domain-containing protein 2 (410 aa).

Residues 5–122 enclose the WH1 domain; the sequence is THPDDDSYIV…RGVRKAIEDL (118 aa). Positions 127–171 are disordered; it reads TTSSSTIHNEAELGDDDVFTTATDSSSNSSQKREPNTRTISSPTS. Over residues 146–156 the composition is skewed to polar residues; sequence TTATDSSSNSS. Positions 197-252 constitute a KBD domain; sequence SYPQVTFPEDDEEIVRINPREKIWMTGYEDYRHAPVRGKYLDSTEDADSYVRFAKG. Tyr224 and Tyr227 each carry phosphotyrosine. The segment at 274–294 is disordered; that stretch reads DPKGNVIKTQPPRAKSRRRKE. One can recognise an SPR domain in the interval 300-408; it reads RCVYCRDMFN…CRCCGGKHKA (109 aa).

Homodimer and heterodimer. Able to interact with SPRED1 to form heterodimers. Interacts with RAS. May interact with ZDHHC13 (via ANK repeats) and ZDHHC17 (via ANK repeats). Interacts with TESK1. Interacts with NF1. In terms of processing, phosphorylated on serine and threonine residues. Phosphorylated on tyrosine. Phosphorylation of Tyr-224 and Tyr-227 are required for ubiquitination. Post-translationally, ubiquitinated; leading to degradation by the proteasome. In terms of tissue distribution, expressed in the eye, with higher expression in lens epithelium than in lens fiber cells at postnatal day 15.

The protein resides in the cell membrane. The protein localises to the cytoplasmic vesicle. It is found in the secretory vesicle membrane. Its subcellular location is the cytoplasm. Its function is as follows. Negatively regulates Ras signaling pathways and downstream activation of MAP kinases. Recruits and translocates NF1 to the cell membrane, thereby enabling NF1-dependent hydrolysis of active GTP-bound Ras to inactive GDP-bound Ras. Inhibits fibroblast growth factor (FGF)-induced retinal lens fiber differentiation, probably by inhibiting FGF-mediated phosphorylation of ERK1/2. Inhibits TGFB-induced epithelial-to-mesenchymal transition in lens epithelial cells. The sequence is that of Sprouty-related, EVH1 domain-containing protein 2 (Spred2) from Rattus norvegicus (Rat).